The primary structure comprises 526 residues: Methane monooxygenase component A alpha chain (526 aa).

Fe cation is bound by residues E114, E144, and H147. C151 is a catalytic residue. Fe cation contacts are provided by E209, E243, and H246.

Belongs to the TmoA/XamoA family. As to quaternary structure, m.trichosporium has two forms of methane monooxygenase, a soluble and a membrane-bound type. The soluble type consists of four components (A to D): protein A, comprising three chains, in an alpha-2, beta-2, gamma-2 configuration, is a nonheme iron protein containing an unusual mu-hydroxo bridge structure at its active site and interacts with both oxygen and methane. Fe cation is required as a cofactor.

It catalyses the reaction methane + NADH + O2 + H(+) = methanol + NAD(+) + H2O. The enzyme catalyses methane + NADPH + O2 + H(+) = methanol + NADP(+) + H2O. Functionally, responsible for the initial oxygenation of methane to methanol in methanotrophs. It also catalyzes the monohydroxylation of a variety of unactivated alkenes, alicyclic, aromatic and heterocyclic compounds. In Methylosinus trichosporium, this protein is Methane monooxygenase component A alpha chain (mmoX).